The primary structure comprises 335 residues: Calcium-binding protein TgpCaBP (335 aa).

The helical transmembrane segment at 30–50 (LPLCVFSLFLFSFAFSALSGA) threads the bilayer. 4 consecutive EF-hand domains span residues 113–148 (MHQHQVRMEFQAIDKDNDGKVSLSELEATYVDSLDQ), 153–188 (QHKKEVEQRFKTVDKDNDGLLDLSEIRILMDPGKDE), 190–225 (LMKIEIEEILNAQDKNGDRKITVTEFIETEGTGSLN), and 227–262 (VEKTELEKEFKSYDLNADGAIDVEELQQIIKDPHSH). Aspartate 126, aspartate 128, aspartate 130, lysine 132, glutamate 137, aspartate 166, aspartate 168, aspartate 170, glutamate 177, aspartate 203, asparagine 205, aspartate 207, lysine 209, glutamate 214, aspartate 240, asparagine 242, aspartate 244, and glutamate 251 together coordinate Ca(2+). A Prevents secretion from ER motif is present at residues 332–335 (HDEL).

It is found in the endoplasmic reticulum membrane. The protein resides in the cytoplasm. The protein localises to the cytosol. Calcium-binding protein. Participates in the efflux of intracellular Ca(2+) and storage of Ca(2+) in the endoplasmic reticulum. Required for gliding, host cell invasion and egress. Required for microneme secretion. This Toxoplasma gondii protein is Calcium-binding protein TgpCaBP.